The primary structure comprises 287 residues: Protein UL24 homolog (287 aa).

Disordered regions lie at residues 1–33 (MARRRKEVQRGESRSHRSRTRSKTAHHRKFSRR) and 254–287 (RVGKESATKPASYSTSTEESKNLSEPCFDPDSNL). Over residues 16–33 (HRSRTRSKTAHHRKFSRR) the composition is skewed to basic residues.

This sequence belongs to the herpesviridae UL24 family.

The protein resides in the virion. Its subcellular location is the host cytoplasm. The protein localises to the host nucleus. It is found in the host nucleolus. It localises to the host Golgi apparatus. Its function is as follows. May participate in nuclear egress of viral particles. Plays a role in the dispersal of several host nucleolar proteins including NCL/nucleolin and NPM1. Since deletion of host NCL/nucleolin negatively impact on nuclear egress, UL24 supposedly acts on this process through its effect on host nucleoli. The sequence is that of Protein UL24 homolog from Infectious laryngotracheitis virus (strain Thorne V882) (ILTV).